The following is a 425-amino-acid chain: Elongation factor 1-alpha (425 aa).

Positions 5-221 (KPHINLAVIG…DELEVPDKPT (217 aa)) constitute a tr-type G domain. The interval 14–21 (GHIDHGKS) is G1. 14 to 21 (GHIDHGKS) contacts GTP. Serine 21 serves as a coordination point for Mg(2+). Residues 70–74 (GITID) form a G2 region. A G3 region spans residues 91 to 94 (DCPG). Residues 91 to 95 (DCPGH) and 146 to 149 (NKMD) contribute to the GTP site. The tract at residues 146 to 149 (NKMD) is G4. The G5 stretch occupies residues 185–187 (SAF).

This sequence belongs to the TRAFAC class translation factor GTPase superfamily. Classic translation factor GTPase family. EF-Tu/EF-1A subfamily.

It is found in the cytoplasm. The catalysed reaction is GTP + H2O = GDP + phosphate + H(+). Its function is as follows. GTP hydrolase that promotes the GTP-dependent binding of aminoacyl-tRNA to the A-site of ribosomes during protein biosynthesis. This chain is Elongation factor 1-alpha, found in Methanospirillum hungatei JF-1 (strain ATCC 27890 / DSM 864 / NBRC 100397 / JF-1).